The sequence spans 320 residues: o-succinylbenzoate synthase (320 aa).

Residue K133 is the Proton donor of the active site. 3 residues coordinate Mg(2+): D161, E190, and D213. The active-site Proton acceptor is K235.

This sequence belongs to the mandelate racemase/muconate lactonizing enzyme family. MenC type 1 subfamily. It depends on a divalent metal cation as a cofactor.

It carries out the reaction (1R,6R)-6-hydroxy-2-succinyl-cyclohexa-2,4-diene-1-carboxylate = 2-succinylbenzoate + H2O. The protein operates within quinol/quinone metabolism; 1,4-dihydroxy-2-naphthoate biosynthesis; 1,4-dihydroxy-2-naphthoate from chorismate: step 4/7. It participates in quinol/quinone metabolism; menaquinone biosynthesis. In terms of biological role, converts 2-succinyl-6-hydroxy-2,4-cyclohexadiene-1-carboxylate (SHCHC) to 2-succinylbenzoate (OSB). The polypeptide is o-succinylbenzoate synthase (Escherichia coli O157:H7).